The following is a 331-amino-acid chain: Carbonic anhydrase-related protein 11 (331 aa).

A signal peptide spans 1–23 (MGGAARLSAPRALVLWAVLGAAA). The Alpha-carbonic anhydrase domain occupies 33–306 (DWWSYKDNLQ…LAHRALRGNR (274 aa)). 4 N-linked (GlcNAc...) asparagine glycosylation sites follow: Asn118, Asn170, Asn189, and Asn263. The segment at 303–331 (RGNRDPRHPERRCRGPNYRLHVDGAPHGR) is disordered. Over residues 322–331 (LHVDGAPHGR) the composition is skewed to basic and acidic residues.

This sequence belongs to the alpha-carbonic anhydrase family.

It is found in the secreted. Does not have a catalytic activity. This Sus scrofa (Pig) protein is Carbonic anhydrase-related protein 11 (CA11).